A 369-amino-acid polypeptide reads, in one-letter code: Protein DUF642 L-GALACTONO-1,4-LACTONE-RESPONSIVE GENE 2 (369 aa).

The first 19 residues, 1-19, serve as a signal peptide directing secretion; that stretch reads MEGVTVVSFFLLFIATAMA. Asparagine 125 carries N-linked (GlcNAc...) asparagine glycosylation.

In terms of tissue distribution, expressed in roots, seedlings and leaves.

Its subcellular location is the secreted. It localises to the cell wall. In terms of biological role, involved in the regulation of testa rupture during seed germination. Required during roots and rosettes development. The protein is Protein DUF642 L-GALACTONO-1,4-LACTONE-RESPONSIVE GENE 2 of Arabidopsis thaliana (Mouse-ear cress).